The following is a 383-amino-acid chain: MTPKLKLNNNINWTKRTIDSLFDLKKGEMLEKELITPEGKYEYFNGGVKNSGRTDKFNTFKNTISVIVGGSCGYVRLADKNFFCGQSNCTLNLLDPLELDLKFAYYALKSQQERIEALAFGTTIQNIRISDLKELEIPFTSNKNEQHAIANTLSVFDERLENLASLIEINRKLRDEYAHKLFSLDEAFLSHWKLEALQSQMHEITLGEIFNFKSGKYLKSEERLEEGKFPYYGAGIDNTGFVAEPNTEKDTISIISNGYSLGNIRYHEIPWFNGTGSIALEPMNNEIYVPFFYCALKYLQKDIKERMKSDDSPFLSLKLAGEIKVPYVKSFQLQRKAGKIVFLLDQKLDQYKKELSSLTVIRDTLLKKLFPDMTERTKSIKDY.

Residues methionine 1–asparagine 142 form a TRD1 region. A conserved region 1 region spans residues lysine 143–phenylalanine 182. Residues lysine 143–phenylalanine 182 adopt a coiled-coil conformation. The TRD2 stretch occupies residues serine 183–serine 330. The conserved region 2 stretch occupies residues phenylalanine 331 to phenylalanine 370. Residues phenylalanine 331–phenylalanine 370 are a coiled coil.

Belongs to the type-I restriction system S methylase family.

In terms of biological role, the specificity (S) subunit of a type I restriction enzyme; this subunit dictates DNA sequence specificity. This bacterium does not encode the associated endonuclease or methylase subunits. The sequence is that of Putative type I specificity subunit S.MgeORF438P from Mycoplasma genitalium (strain ATCC 33530 / DSM 19775 / NCTC 10195 / G37) (Mycoplasmoides genitalium).